Consider the following 290-residue polypeptide: Enoyl-CoA hydratase, mitochondrial (290 aa).

The N-terminal 29 residues, 1 to 29 (MAALRALLPRACNSLLSPVRCPEFRRFAS), are a transit peptide targeting the mitochondrion. 98 to 101 (ADIK) provides a ligand contact to substrate. N6-acetyllysine; alternate occurs at positions 101 and 115. An N6-succinyllysine; alternate mark is found at lysine 101 and lysine 115. Residue glycine 141 coordinates substrate. Lysine 204 is modified (N6-succinyllysine). The residue at position 211 (lysine 211) is an N6-acetyllysine.

This sequence belongs to the enoyl-CoA hydratase/isomerase family. Homohexamer; dimer of trimers. Detected in liver (at protein level).

It is found in the mitochondrion matrix. The enzyme catalyses a (3S)-3-hydroxyacyl-CoA = a (2E)-enoyl-CoA + H2O. It carries out the reaction a (3E)-enoyl-CoA = a 4-saturated (2E)-enoyl-CoA. It catalyses the reaction (3E)-hexenoyl-CoA = (2E)-hexenoyl-CoA. The catalysed reaction is (3S)-3-hydroxybutanoyl-CoA = (2E)-butenoyl-CoA + H2O. The enzyme catalyses 3-hydroxyisovaleryl-CoA = 3-methylbut-2-enoyl-CoA + H2O. It carries out the reaction 3-hydroxypropanoyl-CoA = acryloyl-CoA + H2O. It catalyses the reaction 3-hydroxybutanoyl-CoA = (2E)-butenoyl-CoA + H2O. The catalysed reaction is 2-methylpropenoyl-CoA + H2O = (S)-3-hydroxyisobutanoyl-CoA. The enzyme catalyses (3S)-hydroxyhexanoyl-CoA = (2E)-hexenoyl-CoA + H2O. It carries out the reaction (3S)-hydroxydecanoyl-CoA = (2E)-decenoyl-CoA + H2O. It functions in the pathway lipid metabolism; fatty acid beta-oxidation. Functionally, converts unsaturated trans-2-enoyl-CoA species ((2E)-enoyl-CoA) to the corresponding 3(S)-3-hydroxyacyl-CoA species through addition of a water molecule to the double bond. Catalyzes the hydration of medium- and short-chained fatty enoyl-CoA thioesters from 4 carbons long (C4) up to C16. Has high substrate specificity for crotonyl-CoA ((2E)-butenoyl-CoA) and moderate specificity for acryloyl-CoA, 3-methylcrotonyl-CoA (3-methyl-(2E)-butenoyl-CoA) and methacrylyl-CoA ((2E)-2-methylpropenoyl-CoA). Can bind tiglyl-CoA (2-methylcrotonoyl-CoA), but hydrates only a small amount of this substrate. Plays a key role in the beta-oxidation spiral of short- and medium-chain fatty acid oxidation. At a lower rate than the hydratase reaction, catalyzes the isomerase reaction of trans-3-enoyl-CoA species (such as (3E)-hexenoyl-CoA) to trans-2-enoyl-CoA species (such as (2E)-hexenoyl-CoA), which are subsequently hydrated to 3(S)-3-hydroxyacyl-CoA species (such as (3S)-hydroxyhexanoyl-CoA). This Rattus norvegicus (Rat) protein is Enoyl-CoA hydratase, mitochondrial.